The following is an 843-amino-acid chain: DNA-directed RNA polymerase subunit beta' (843 aa).

Positions 70, 72, 85, and 88 each coordinate Zn(2+). Mg(2+)-binding residues include aspartate 686, aspartate 688, and aspartate 690.

This sequence belongs to the RNA polymerase beta' chain family. RpoC1 subfamily. As to quaternary structure, in plastids the minimal PEP RNA polymerase catalytic core is composed of four subunits: alpha, beta, beta', and beta''. When a (nuclear-encoded) sigma factor is associated with the core the holoenzyme is formed, which can initiate transcription. It depends on Mg(2+) as a cofactor. Requires Zn(2+) as cofactor.

Its subcellular location is the plastid. The protein localises to the chloroplast. The catalysed reaction is RNA(n) + a ribonucleoside 5'-triphosphate = RNA(n+1) + diphosphate. Functionally, DNA-dependent RNA polymerase catalyzes the transcription of DNA into RNA using the four ribonucleoside triphosphates as substrates. The polypeptide is DNA-directed RNA polymerase subunit beta' (Trieres chinensis (Marine centric diatom)).